The primary structure comprises 138 residues: MAPK kinase substrate protein At1g80180 (138 aa).

The tract at residues 52-138 (TSEVQDQTTK…RKRPAKRRSR (87 aa)) is disordered. The span at 69 to 81 (KPIRTDGGMERSR) shows a compositional bias: basic and acidic residues. At Ser-98 the chain carries Phosphoserine. At Ser-105 the chain carries Phosphoserine; by MAPK6. Over residues 121-138 (QPGKKVNQRKRPAKRRSR) the composition is skewed to basic residues.

As to expression, expressed in developing cotyledons, mature cotyledons, cotyledon epidermis and stomata.

Its function is as follows. May play a role in the regulation of stomata patterning. In Arabidopsis thaliana (Mouse-ear cress), this protein is MAPK kinase substrate protein At1g80180.